A 155-amino-acid chain; its full sequence is UPF0178 protein Amet_2995 (155 aa).

The protein belongs to the UPF0178 family.

The chain is UPF0178 protein Amet_2995 from Alkaliphilus metalliredigens (strain QYMF).